Consider the following 463-residue polypeptide: Retinoic acid receptor RXR-gamma (463 aa).

Residues 1–138 (MYGNYSHFMK…TSPGSLVKHI (138 aa)) are modulating. Residues 18-53 (SPGHTGSTSMSPSAALSTGKPMDSHPSYTDTPVSAP) are disordered. Residues 21–33 (HTGSTSMSPSAAL) are compositionally biased toward polar residues. A DNA-binding region (nuclear receptor) is located at residues 136–211 (KHICAICGDR…MGMKREAVQE (76 aa)). 2 consecutive NR C4-type zinc fingers follow at residues 139–159 (CAIC…CEGC) and 175–199 (CRDN…YQKC). Residues 205 to 230 (KREAVQEERQRSRERAESEAECATSG) form a hinge region. Positions 231 to 459 (HEDMPVERIL…TFLMEMLETP (229 aa)) constitute an NR LBD domain.

It belongs to the nuclear hormone receptor family. NR2 subfamily. Homodimer. Heterodimer with a RAR molecule. Binds DNA preferentially as a RAR/RXR heterodimer. Interacts with RARA. Post-translationally, acetylated by EP300. Expressed in aortic endothelial cells (at protein level).

It localises to the nucleus. It is found in the cytoplasm. In terms of biological role, receptor for retinoic acid. Retinoic acid receptors bind as heterodimers to their target response elements in response to their ligands, all-trans or 9-cis retinoic acid, and regulate gene expression in various biological processes. The RAR/RXR heterodimers bind to the retinoic acid response elements (RARE) composed of tandem 5'-AGGTCA-3' sites known as DR1-DR5. The high affinity ligand for RXRs is 9-cis retinoic acid. This is Retinoic acid receptor RXR-gamma (RXRG) from Homo sapiens (Human).